The following is a 745-amino-acid chain: uncharacterized protein (745 aa).

The 99-residue stretch at asparagine 158 to aspartate 256 folds into the HTH araC/xylS-type domain. 2 consecutive DNA-binding regions (H-T-H motif) follow at residues serine 175 to leucine 196 and isoleucine 223 to threonine 246.

This is an uncharacterized protein from Staphylococcus aureus (strain MW2).